The following is a 466-amino-acid chain: Ribulose bisphosphate carboxylase large chain (466 aa).

Residue K4 is modified to N6,N6,N6-trimethyllysine. N113 and T163 together coordinate substrate. The active-site Proton acceptor is the K165. K167 lines the substrate pocket. Mg(2+) is bound by residues K191, D193, and E194. N6-carboxylysine is present on K191. The active-site Proton acceptor is the H284. R285, H317, and S369 together coordinate substrate.

This sequence belongs to the RuBisCO large chain family. Type I subfamily. In terms of assembly, heterohexadecamer of 8 large chains and 8 small chains; disulfide-linked. The disulfide link is formed within the large subunit homodimers. The cofactor is Mg(2+). The disulfide bond which can form in the large chain dimeric partners within the hexadecamer appears to be associated with oxidative stress and protein turnover.

Its subcellular location is the plastid. It localises to the chloroplast. It catalyses the reaction 2 (2R)-3-phosphoglycerate + 2 H(+) = D-ribulose 1,5-bisphosphate + CO2 + H2O. The enzyme catalyses D-ribulose 1,5-bisphosphate + O2 = 2-phosphoglycolate + (2R)-3-phosphoglycerate + 2 H(+). Its function is as follows. RuBisCO catalyzes two reactions: the carboxylation of D-ribulose 1,5-bisphosphate, the primary event in carbon dioxide fixation, as well as the oxidative fragmentation of the pentose substrate in the photorespiration process. Both reactions occur simultaneously and in competition at the same active site. The chain is Ribulose bisphosphate carboxylase large chain from Drimys winteri (Winter's bark).